The sequence spans 206 residues: Fibroblast growth factor 4 (206 aa).

A signal peptide spans 1 to 29 (MAGPGTAAAALLPAVLLAVLAPWAGRGGA).

It belongs to the heparin-binding growth factors family. Interacts with FGFR1, FGFR2, FGFR3 and FGFR4. Affinity between fibroblast growth factors (FGFs) and their receptors is increased by heparan sulfate glycosaminoglycans that function as coreceptors.

It is found in the secreted. Plays an important role in the regulation of embryonic development, cell proliferation, and cell differentiation. Required for normal limb and cardiac valve development during embryogenesis. May play a role in embryonic molar tooth bud development via inducing the expression of MSX1, MSX2 and MSX1-mediated expression of SDC1 in dental mesenchyme cells. The protein is Fibroblast growth factor 4 of Bos taurus (Bovine).